Consider the following 227-residue polypeptide: Cytochrome c oxidase subunit 2 (227 aa).

The Mitochondrial intermembrane portion of the chain corresponds to 1 to 14; that stretch reads MAYPLQLGFQDATS. A helical membrane pass occupies residues 15-45; sequence PVMEELLHFHDHTLMIIFLISSLVLYIIMLM. The Mitochondrial matrix segment spans residues 46–59; the sequence is LTTKLVHTNMMNVQ. The chain crosses the membrane as a helical span at residues 60-87; the sequence is EMEMIWTILPAIILILIALPSLHTLYMM. Residues 88–227 are Mitochondrial intermembrane-facing; the sequence is DEINNPLLTI…YFESWSASLA (140 aa). Cu cation-binding residues include His-161, Cys-196, Glu-198, Cys-200, His-204, and Met-207. Glu-198 is a Mg(2+) binding site. Tyr-218 is subject to Phosphotyrosine.

This sequence belongs to the cytochrome c oxidase subunit 2 family. As to quaternary structure, component of the cytochrome c oxidase (complex IV, CIV), a multisubunit enzyme composed of 14 subunits. The complex is composed of a catalytic core of 3 subunits MT-CO1, MT-CO2 and MT-CO3, encoded in the mitochondrial DNA, and 11 supernumerary subunits COX4I, COX5A, COX5B, COX6A, COX6B, COX6C, COX7A, COX7B, COX7C, COX8 and NDUFA4, which are encoded in the nuclear genome. The complex exists as a monomer or a dimer and forms supercomplexes (SCs) in the inner mitochondrial membrane with NADH-ubiquinone oxidoreductase (complex I, CI) and ubiquinol-cytochrome c oxidoreductase (cytochrome b-c1 complex, complex III, CIII), resulting in different assemblies (supercomplex SCI(1)III(2)IV(1) and megacomplex MCI(2)III(2)IV(2)). Found in a complex with TMEM177, COA6, COX18, COX20, SCO1 and SCO2. Interacts with TMEM177 in a COX20-dependent manner. Interacts with COX20. Interacts with COX16. The cofactor is Cu cation.

The protein localises to the mitochondrion inner membrane. It carries out the reaction 4 Fe(II)-[cytochrome c] + O2 + 8 H(+)(in) = 4 Fe(III)-[cytochrome c] + 2 H2O + 4 H(+)(out). In terms of biological role, component of the cytochrome c oxidase, the last enzyme in the mitochondrial electron transport chain which drives oxidative phosphorylation. The respiratory chain contains 3 multisubunit complexes succinate dehydrogenase (complex II, CII), ubiquinol-cytochrome c oxidoreductase (cytochrome b-c1 complex, complex III, CIII) and cytochrome c oxidase (complex IV, CIV), that cooperate to transfer electrons derived from NADH and succinate to molecular oxygen, creating an electrochemical gradient over the inner membrane that drives transmembrane transport and the ATP synthase. Cytochrome c oxidase is the component of the respiratory chain that catalyzes the reduction of oxygen to water. Electrons originating from reduced cytochrome c in the intermembrane space (IMS) are transferred via the dinuclear copper A center (CU(A)) of subunit 2 and heme A of subunit 1 to the active site in subunit 1, a binuclear center (BNC) formed by heme A3 and copper B (CU(B)). The BNC reduces molecular oxygen to 2 water molecules using 4 electrons from cytochrome c in the IMS and 4 protons from the mitochondrial matrix. The sequence is that of Cytochrome c oxidase subunit 2 (MT-CO2) from Mammuthus primigenius (Siberian woolly mammoth).